Consider the following 241-residue polypeptide: Corrinoid adenosyltransferase MMAB (241 aa).

The transit peptide at 1–26 directs the protein to the mitochondrion; the sequence is MAVWGPGGRLGLRGCLGARKLLCPRF. Residues 27 to 69 form a disordered region; sequence QSRGPQGVEDGDRPQPSSKTPKVPKIYTKTGDKGFSSTFTGER. ATP is bound by residues 54-63 and Lys72; that span reads TKTGDKGFSS. Ser128 is subject to Phosphoserine. 184-188 provides a ligand contact to ATP; that stretch reads RRAER. Lys205 is subject to N6-succinyllysine. Asn208 serves as a coordination point for ATP. At Lys224 the chain carries N6-acetyllysine; alternate. Lys224 carries the N6-succinyllysine; alternate modification.

This sequence belongs to the Cob(I)alamin adenosyltransferase family. In terms of assembly, homotrimer.

The protein localises to the mitochondrion. It catalyses the reaction cob(I)alamin-[corrinoid adenosyltransferase] + ATP = apo-[corrinoid adenosyltransferase] + adenosylcob(III)alamin + triphosphate. In terms of biological role, converts cob(I)alamin to adenosylcobalamin (adenosylcob(III)alamin), a coenzyme for methylmalonyl-CoA mutase, therefore participates in the final step of the vitamin B12 conversion. Generates adenosylcobalamin (AdoCbl) and directly delivers the cofactor to MUT in a transfer that is stimulated by ATP-binding to MMAB and gated by MMAA. This Bos taurus (Bovine) protein is Corrinoid adenosyltransferase MMAB.